The primary structure comprises 72 residues: Translation initiation factor IF-1 (72 aa).

Residues 1–72 (MPKEEVLEFP…TKGRITYRFK (72 aa)) form the S1-like domain.

This sequence belongs to the IF-1 family. In terms of assembly, component of the 30S ribosomal translation pre-initiation complex which assembles on the 30S ribosome in the order IF-2 and IF-3, IF-1 and N-formylmethionyl-tRNA(fMet); mRNA recruitment can occur at any time during PIC assembly.

Its subcellular location is the cytoplasm. In terms of biological role, one of the essential components for the initiation of protein synthesis. Stabilizes the binding of IF-2 and IF-3 on the 30S subunit to which N-formylmethionyl-tRNA(fMet) subsequently binds. Helps modulate mRNA selection, yielding the 30S pre-initiation complex (PIC). Upon addition of the 50S ribosomal subunit IF-1, IF-2 and IF-3 are released leaving the mature 70S translation initiation complex. In Chelativorans sp. (strain BNC1), this protein is Translation initiation factor IF-1.